A 185-amino-acid polypeptide reads, in one-letter code: Acireductone dioxygenase (185 aa).

Residues 1-23 are disordered; it reads MSRLSIHPEGNTNATSPAEPLLE. Fe(2+)-binding residues include histidine 102, histidine 104, glutamate 108, and histidine 146. Ni(2+) is bound by residues histidine 102, histidine 104, glutamate 108, and histidine 146.

The protein belongs to the acireductone dioxygenase (ARD) family. Monomer. The cofactor is Fe(2+). It depends on Ni(2+) as a cofactor.

It catalyses the reaction 1,2-dihydroxy-5-(methylsulfanyl)pent-1-en-3-one + O2 = 3-(methylsulfanyl)propanoate + CO + formate + 2 H(+). It carries out the reaction 1,2-dihydroxy-5-(methylsulfanyl)pent-1-en-3-one + O2 = 4-methylsulfanyl-2-oxobutanoate + formate + 2 H(+). The protein operates within amino-acid biosynthesis; L-methionine biosynthesis via salvage pathway; L-methionine from S-methyl-5-thio-alpha-D-ribose 1-phosphate: step 5/6. Its function is as follows. Catalyzes 2 different reactions between oxygen and the acireductone 1,2-dihydroxy-3-keto-5-methylthiopentene (DHK-MTPene) depending upon the metal bound in the active site. Fe-containing acireductone dioxygenase (Fe-ARD) produces formate and 2-keto-4-methylthiobutyrate (KMTB), the alpha-ketoacid precursor of methionine in the methionine recycle pathway. Ni-containing acireductone dioxygenase (Ni-ARD) produces methylthiopropionate, carbon monoxide and formate, and does not lie on the methionine recycle pathway. In Prochlorococcus marinus (strain MIT 9303), this protein is Acireductone dioxygenase.